We begin with the raw amino-acid sequence, 294 residues long: Melanocortin receptor 5 (294 aa).

The Extracellular segment spans residues 1-29 (FLDLQLNATEGNVSGPSVGNTSSPCEDMG). Residues N7, N12, and N20 are each glycosylated (N-linked (GlcNAc...) asparagine). Residues 30 to 53 (IEVEVFLTLGLISLLENILVIGAI) form a helical membrane-spanning segment. Topologically, residues 54–65 (ARNKNLHVPMYF) are cytoplasmic. The helical transmembrane segment at 66 to 89 (FVCSLAVADMLVSLSNSWETITIY) threads the bilayer. The Extracellular segment spans residues 90–106 (LIANKHLVLSDTSVRHL). Residues 107 to 130 (DNVFDSMICISLVASMCSLLAVAV) form a helical membrane-spanning segment. Residues 131–147 (DRYVTIFYALRYQHLMT) are Cytoplasmic-facing. A helical membrane pass occupies residues 148-171 (GRRCGAIIAGIWALCTGCGPVFIV). Residues 172-178 (YYESTYV) are Extracellular-facing. The helical transmembrane segment at 179-203 (VVCLVAMFLTMLLLMASLYAHMFLQ) threads the bilayer. Residues 204–231 (ARAHVRRIAALPGYRSARQRTSMKGAVT) are Cytoplasmic-facing. Residues 232–257 (LAMLLGVFIVCWAPFFLHLILMISCP) traverse the membrane as a helical segment. Residues 258 to 265 (QNLYCSCF) lie on the Extracellular side of the membrane. The chain crosses the membrane as a helical span at residues 266-289 (MSHFNMYLILIMCNSVIDPLIYAF). Over 290 to 294 (RSQEK) the chain is Cytoplasmic.

It belongs to the G-protein coupled receptor 1 family.

Its subcellular location is the cell membrane. In terms of biological role, receptor for MSH (alpha, beta and gamma) and ACTH. The activity of this receptor is mediated by G proteins which activate adenylate cyclase. This receptor is a possible mediator of the immunomodulation properties of melanocortins. This is Melanocortin receptor 5 (MC5R) from Sus scrofa (Pig).